A 283-amino-acid polypeptide reads, in one-letter code: Thymidylate synthase (283 aa).

Arg-22 contacts dUMP. Cys-160 (nucleophile) is an active-site residue. DUMP-binding positions include 180-183 (RSAD), Asn-191, and 221-223 (HIY). Asp-183 lines the (6R)-5,10-methylene-5,6,7,8-tetrahydrofolate pocket. Residue Ser-282 participates in (6R)-5,10-methylene-5,6,7,8-tetrahydrofolate binding.

This sequence belongs to the thymidylate synthase family. Bacterial-type ThyA subfamily. Homodimer.

It localises to the cytoplasm. It catalyses the reaction dUMP + (6R)-5,10-methylene-5,6,7,8-tetrahydrofolate = 7,8-dihydrofolate + dTMP. The protein operates within pyrimidine metabolism; dTTP biosynthesis. Functionally, catalyzes the reductive methylation of 2'-deoxyuridine-5'-monophosphate (dUMP) to 2'-deoxythymidine-5'-monophosphate (dTMP) while utilizing 5,10-methylenetetrahydrofolate (mTHF) as the methyl donor and reductant in the reaction, yielding dihydrofolate (DHF) as a by-product. This enzymatic reaction provides an intracellular de novo source of dTMP, an essential precursor for DNA biosynthesis. This Glaesserella parasuis serovar 5 (strain SH0165) (Haemophilus parasuis) protein is Thymidylate synthase.